A 79-amino-acid polypeptide reads, in one-letter code: Acyl carrier protein (79 aa).

The 76-residue stretch at 2 to 77 (SNIEERVKKI…QAIDYINAHA (76 aa)) folds into the Carrier domain. S37 bears the O-(pantetheine 4'-phosphoryl)serine mark.

This sequence belongs to the acyl carrier protein (ACP) family. In terms of processing, 4'-phosphopantetheine is transferred from CoA to a specific serine of apo-ACP by AcpS. This modification is essential for activity because fatty acids are bound in thioester linkage to the sulfhydryl of the prosthetic group.

Its subcellular location is the cytoplasm. It participates in lipid metabolism; fatty acid biosynthesis. Carrier of the growing fatty acid chain in fatty acid biosynthesis. The protein is Acyl carrier protein of Thioalkalivibrio sulfidiphilus (strain HL-EbGR7).